A 345-amino-acid chain; its full sequence is D-alanine--D-alanine ligase (345 aa).

Residues 133-332 enclose the ATP-grasp domain; the sequence is KWLCHARGVK…LPHTKRAKVT (200 aa). 160-211 lines the ATP pocket; that stretch reads AYPIIVKPSRLGSSIGVSIVKDESKLDYALDSAFEFDNTVIVEPFLEGVKEY. Residues D284, E296, and N298 each coordinate Mg(2+).

It belongs to the D-alanine--D-alanine ligase family. Requires Mg(2+) as cofactor. Mn(2+) is required as a cofactor.

It is found in the cytoplasm. It carries out the reaction 2 D-alanine + ATP = D-alanyl-D-alanine + ADP + phosphate + H(+). Its pathway is cell wall biogenesis; peptidoglycan biosynthesis. In terms of biological role, cell wall formation. This is D-alanine--D-alanine ligase from Sulfurimonas denitrificans (strain ATCC 33889 / DSM 1251) (Thiomicrospira denitrificans (strain ATCC 33889 / DSM 1251)).